The sequence spans 876 residues: DNA polymerase 1 (876 aa).

This sequence belongs to the DNA polymerase type-B family.

It catalyses the reaction DNA(n) + a 2'-deoxyribonucleoside 5'-triphosphate = DNA(n+1) + diphosphate. This polymerase possesses two enzymatic activities: DNA synthesis (polymerase) and an exonucleolytic activity that degrades single-stranded DNA in the 3'- to 5'-direction. In Sulfolobus acidocaldarius (strain ATCC 33909 / DSM 639 / JCM 8929 / NBRC 15157 / NCIMB 11770), this protein is DNA polymerase 1 (dpo1).